The sequence spans 1015 residues: DNA ligase 3 (1015 aa).

The segment at 94-186 (FCVDYAKRGT…QISQHIADLS (93 aa)) adopts a PARP-type zinc-finger fold. Zn(2+)-binding residues include Cys106, Cys109, His140, and Cys143. Phosphoserine is present on residues Ser211, Ser217, Ser228, and Ser244. The disordered stretch occupies residues 229 to 255 (GFSAAKPNNSEQAPSSPAPGTSLSASK). A compositionally biased stretch (polar residues) spans 234–253 (KPNNSEQAPSSPAPGTSLSA). Interaction with DNA stretches follow at residues 279 to 282 (PSYN), 323 to 328 (VYNLND), 393 to 396 (TKED), and 426 to 432 (KMNSGAK). Residue Glu511 coordinates ATP. The active-site N6-AMP-lysine intermediate is Lys513. Arg518 and Arg533 together coordinate ATP. Mg(2+)-binding residues include Glu565 and Glu660. Lys665, Arg676, and Lys680 together coordinate ATP. Positions 849–926 (DEASPTTGGS…KSSPVKVGMK (78 aa)) are disordered. The span at 854–884 (TTGGSSGENEGTAGSAGPCKGPPSKSSASAK) shows a compositional bias: low complexity. A Phosphoserine modification is found at Ser919. The BRCT domain occupies 939–1015 (VLLDVFTGVR…IRKRRLIAPC (77 aa)).

It belongs to the ATP-dependent DNA ligase family. As to quaternary structure, isoform 3 interacts (via BRCT domain) with the nuclear DNA-repair protein XRCC1. Interacts with POLG. Interacts with POLB. Mg(2+) is required as a cofactor. In terms of tissue distribution, the alpha isoform is expressed in all tissues, while the beta isoform is expressed only in the testis.

The protein localises to the nucleus. The catalysed reaction is ATP + (deoxyribonucleotide)n-3'-hydroxyl + 5'-phospho-(deoxyribonucleotide)m = (deoxyribonucleotide)n+m + AMP + diphosphate.. Its function is as follows. The alpha isoform interacts with DNA-repair protein XRCC1 and can correct defective DNA strand-break repair and sister chromatid exchange following treatment with ionizing radiation and alkylating agents. The beta isoform does not interact with XRCC1 and may be specifically involved in the completion of homologous recombination events that occur during meiotic prophase. The protein is DNA ligase 3 (Lig3) of Mus musculus (Mouse).